The primary structure comprises 65 residues: Large ribosomal subunit protein bL35 (65 aa).

The tract at residues 1-26 (MPKMKTHRGAAKRFRKTGTGKLKRGK) is disordered.

The protein belongs to the bacterial ribosomal protein bL35 family.

The sequence is that of Large ribosomal subunit protein bL35 from Clostridium beijerinckii (strain ATCC 51743 / NCIMB 8052) (Clostridium acetobutylicum).